Reading from the N-terminus, the 465-residue chain is A-type ATP synthase subunit B (465 aa).

Belongs to the ATPase alpha/beta chains family. As to quaternary structure, the A-type ATPase is composed of subunits A(3), B(3), C, D, E(1 or 2), F, H(2), I and proteolipid K(x).

Its subcellular location is the cell membrane. Functionally, component of the A-type ATP synthase that produces ATP from ADP in the presence of a proton gradient across the membrane. The B chain is a regulatory subunit. This chain is A-type ATP synthase subunit B, found in Methanocaldococcus jannaschii (strain ATCC 43067 / DSM 2661 / JAL-1 / JCM 10045 / NBRC 100440) (Methanococcus jannaschii).